The chain runs to 367 residues: Flagellin 2 (367 aa).

The protein belongs to the bacterial flagellin family.

The protein resides in the secreted. Its subcellular location is the bacterial flagellum. Its function is as follows. Flagellin is the subunit protein which polymerizes to form the filaments of bacterial flagella. The polypeptide is Flagellin 2 (fliC2) (Proteus mirabilis).